Consider the following 41-residue polypeptide: Maticotoxin A (41 aa).

2 disulfide bridges follow: cysteine 3–cysteine 22 and cysteine 15–cysteine 39.

Belongs to the three-finger toxin family. Short-chain subfamily. In terms of tissue distribution, expressed by the venom gland.

It localises to the secreted. The protein is Maticotoxin A of Calliophis bivirgatus (Blue Malaysian coral snake).